The following is a 596-amino-acid chain: Pumilio homolog 12 (596 aa).

The PUM-HD domain occupies 254-596; sequence LNEDLTMSLN…KVLSALSSKK (343 aa). Pumilio repeat units lie at residues 277-312, 313-348, 349-388, 389-424, 425-460, 461-496, 497-532, and 533-570; these read EARGKIYYLAKDQHGCRFLQRIFSEKDGNDIEMIFN, EIIDYISELMMDPFGNYLVQKLLEVCNEDQRMQIVH, SITRKPGLLIKISCDMHGTRAVQKIVETAKREEEISIIIS, ALKHGIVHLIKNVNGNHVVQRCLQYLLPYCGKFLFE, AAITHCVELATDRHGCCVLQKCLGYSEGEQKQHLVS, EIASNALLLSQDPFGNYVLQYVFELQLQWATFEILE, QLEGNYTELSMQKCSSNVVEKCLKLADDKHRARIIR, and ELINYGRLDQVMLDPYGNYVIQAALKQSKGNVHALLVD.

It localises to the cytoplasm. Its subcellular location is the nucleus. In terms of biological role, sequence-specific RNA-binding protein that regulates translation and mRNA stability by binding the 3'-UTR of target mRNAs. The chain is Pumilio homolog 12 (APUM12) from Arabidopsis thaliana (Mouse-ear cress).